A 200-amino-acid chain; its full sequence is Recombination protein RecR (200 aa).

Residues 57 to 72 (CRQCRTLTEQELCPQC) form a C4-type zinc finger. The 96-residue stretch at 80–175 (TQLCVVEGPM…VASRIAHGVP (96 aa)) folds into the Toprim domain.

The protein belongs to the RecR family.

Functionally, may play a role in DNA repair. It seems to be involved in an RecBC-independent recombinational process of DNA repair. It may act with RecF and RecO. This chain is Recombination protein RecR, found in Pseudomonas putida (strain W619).